The primary structure comprises 332 residues: Phosphate acyltransferase (332 aa).

This sequence belongs to the PlsX family. In terms of assembly, homodimer. Probably interacts with PlsY.

The protein localises to the cytoplasm. It carries out the reaction a fatty acyl-[ACP] + phosphate = an acyl phosphate + holo-[ACP]. It participates in lipid metabolism; phospholipid metabolism. In terms of biological role, catalyzes the reversible formation of acyl-phosphate (acyl-PO(4)) from acyl-[acyl-carrier-protein] (acyl-ACP). This enzyme utilizes acyl-ACP as fatty acyl donor, but not acyl-CoA. This Fusobacterium nucleatum subsp. nucleatum (strain ATCC 25586 / DSM 15643 / BCRC 10681 / CIP 101130 / JCM 8532 / KCTC 2640 / LMG 13131 / VPI 4355) protein is Phosphate acyltransferase.